We begin with the raw amino-acid sequence, 301 residues long: Protoheme IX farnesyltransferase 1 (301 aa).

Transmembrane regions (helical) follow at residues 29–49 (VVAL…PHAV), 51–71 (VQPL…AAAL), 101–121 (ALIF…SLVN), 123–143 (LTAW…TAYL), 150–170 (NIVI…TAVT), 177–197 (ALLL…ALAI), 223–243 (CILL…LVGM), 244–264 (CGPV…YKAW), and 275–295 (AMQV…ALLL).

Belongs to the UbiA prenyltransferase family. Protoheme IX farnesyltransferase subfamily.

Its subcellular location is the cell inner membrane. It carries out the reaction heme b + (2E,6E)-farnesyl diphosphate + H2O = Fe(II)-heme o + diphosphate. Its pathway is porphyrin-containing compound metabolism; heme O biosynthesis; heme O from protoheme: step 1/1. Converts heme B (protoheme IX) to heme O by substitution of the vinyl group on carbon 2 of heme B porphyrin ring with a hydroxyethyl farnesyl side group. The chain is Protoheme IX farnesyltransferase 1 from Shewanella baltica (strain OS185).